We begin with the raw amino-acid sequence, 311 residues long: 4-hydroxy-tetrahydrodipicolinate synthase (311 aa).

Threonine 51 is a pyruvate binding site. The active-site Proton donor/acceptor is the tyrosine 140. Residue lysine 168 is the Schiff-base intermediate with substrate of the active site. Isoleucine 209 serves as a coordination point for pyruvate.

Belongs to the DapA family. As to quaternary structure, homotetramer; dimer of dimers.

The protein localises to the cytoplasm. It catalyses the reaction L-aspartate 4-semialdehyde + pyruvate = (2S,4S)-4-hydroxy-2,3,4,5-tetrahydrodipicolinate + H2O + H(+). It functions in the pathway amino-acid biosynthesis; L-lysine biosynthesis via DAP pathway; (S)-tetrahydrodipicolinate from L-aspartate: step 3/4. Its function is as follows. Catalyzes the condensation of (S)-aspartate-beta-semialdehyde [(S)-ASA] and pyruvate to 4-hydroxy-tetrahydrodipicolinate (HTPA). The protein is 4-hydroxy-tetrahydrodipicolinate synthase of Streptococcus pneumoniae (strain ATCC BAA-255 / R6).